The chain runs to 104 residues: Ribonuclease P protein component 4 (104 aa).

Zn(2+) contacts are provided by Cys63, Cys66, Cys89, and Cys92.

The protein belongs to the eukaryotic/archaeal RNase P protein component 4 family. As to quaternary structure, consists of a catalytic RNA component and at least 4-5 protein subunits. Zn(2+) serves as cofactor.

The protein resides in the cytoplasm. The catalysed reaction is Endonucleolytic cleavage of RNA, removing 5'-extranucleotides from tRNA precursor.. Its function is as follows. Part of ribonuclease P, a protein complex that generates mature tRNA molecules by cleaving their 5'-ends. In Methanoregula boonei (strain DSM 21154 / JCM 14090 / 6A8), this protein is Ribonuclease P protein component 4.